A 264-amino-acid chain; its full sequence is Acyl-[acyl-carrier-protein]--UDP-N-acetylglucosamine O-acyltransferase (264 aa).

The protein belongs to the transferase hexapeptide repeat family. LpxA subfamily. In terms of assembly, homotrimer.

Its subcellular location is the cytoplasm. It catalyses the reaction a (3R)-hydroxyacyl-[ACP] + UDP-N-acetyl-alpha-D-glucosamine = a UDP-3-O-[(3R)-3-hydroxyacyl]-N-acetyl-alpha-D-glucosamine + holo-[ACP]. It participates in glycolipid biosynthesis; lipid IV(A) biosynthesis; lipid IV(A) from (3R)-3-hydroxytetradecanoyl-[acyl-carrier-protein] and UDP-N-acetyl-alpha-D-glucosamine: step 1/6. Involved in the biosynthesis of lipid A, a phosphorylated glycolipid that anchors the lipopolysaccharide to the outer membrane of the cell. This Rickettsia conorii (strain ATCC VR-613 / Malish 7) protein is Acyl-[acyl-carrier-protein]--UDP-N-acetylglucosamine O-acyltransferase.